Reading from the N-terminus, the 182-residue chain is Adenylate kinase (182 aa).

An ATP-binding site is contributed by 12 to 17 (GAGKGT). Positions 32-61 (STGDLLRAEVGAKTPLGQEAAAVMNRGELV) are NMP. Residues Thr-33, Arg-38, 59 to 61 (ELV), 85 to 88 (GFPR), and Gln-92 contribute to the AMP site. Positions 126 to 132 (SRGRSDD) are LID. Residue Arg-127 coordinates ATP. Residues Arg-129 and Arg-140 each coordinate AMP. ATP is bound at residue Gly-168.

This sequence belongs to the adenylate kinase family. Monomer.

The protein resides in the cytoplasm. The enzyme catalyses AMP + ATP = 2 ADP. It participates in purine metabolism; AMP biosynthesis via salvage pathway; AMP from ADP: step 1/1. Its function is as follows. Catalyzes the reversible transfer of the terminal phosphate group between ATP and AMP. Plays an important role in cellular energy homeostasis and in adenine nucleotide metabolism. In Prochlorococcus marinus (strain MIT 9303), this protein is Adenylate kinase.